The sequence spans 338 residues: Glyceraldehyde-3-phosphate dehydrogenase (338 aa).

NAD(+) contacts are provided by residues 11 to 12 (TI) and G111. 140-142 (SCN) contacts D-glyceraldehyde 3-phosphate. Catalysis depends on C141, which acts as the Nucleophile. Residue R169 coordinates NAD(+). 195 to 196 (HG) lines the D-glyceraldehyde 3-phosphate pocket. Q302 serves as a coordination point for NAD(+).

The protein belongs to the glyceraldehyde-3-phosphate dehydrogenase family. As to quaternary structure, homotetramer.

Its subcellular location is the cytoplasm. The catalysed reaction is D-glyceraldehyde 3-phosphate + phosphate + NADP(+) = (2R)-3-phospho-glyceroyl phosphate + NADPH + H(+). It catalyses the reaction D-glyceraldehyde 3-phosphate + phosphate + NAD(+) = (2R)-3-phospho-glyceroyl phosphate + NADH + H(+). It participates in carbohydrate degradation; glycolysis; pyruvate from D-glyceraldehyde 3-phosphate: step 1/5. The sequence is that of Glyceraldehyde-3-phosphate dehydrogenase (gap) from Methanobacterium bryantii.